Consider the following 398-residue polypeptide: Acetate kinase (398 aa).

Asn7 contacts Mg(2+). Position 14 (Lys14) interacts with ATP. A substrate-binding site is contributed by Arg85. The active-site Proton donor/acceptor is the Asp142. ATP is bound by residues 202–206, 277–279, and 325–329; these read HLGNG, DMR, and GIGEN. Glu379 contributes to the Mg(2+) binding site.

Belongs to the acetokinase family. In terms of assembly, homodimer. Requires Mg(2+) as cofactor. It depends on Mn(2+) as a cofactor.

The protein localises to the cytoplasm. The enzyme catalyses acetate + ATP = acetyl phosphate + ADP. The protein operates within metabolic intermediate biosynthesis; acetyl-CoA biosynthesis; acetyl-CoA from acetate: step 1/2. Functionally, catalyzes the formation of acetyl phosphate from acetate and ATP. Can also catalyze the reverse reaction. The chain is Acetate kinase from Deinococcus radiodurans (strain ATCC 13939 / DSM 20539 / JCM 16871 / CCUG 27074 / LMG 4051 / NBRC 15346 / NCIMB 9279 / VKM B-1422 / R1).